Consider the following 437-residue polypeptide: tRNA-2-methylthio-N(6)-dimethylallyladenosine synthase (437 aa).

In terms of domain architecture, MTTase N-terminal spans 1 to 115; it reads MKVYIETMGC…ISQVIHKEKA (115 aa). Positions 10, 46, 78, 148, 152, and 155 each coordinate [4Fe-4S] cluster. Residues 134-367 form the Radical SAM core domain; sequence KKAQIRSLLN…QNRHKEILEE (234 aa). One can recognise a TRAM domain in the interval 370-436; sequence KLEVGKTHVV…KGRLIATAKG (67 aa).

Belongs to the methylthiotransferase family. MiaB subfamily. In terms of assembly, monomer. [4Fe-4S] cluster serves as cofactor.

It is found in the cytoplasm. The catalysed reaction is N(6)-dimethylallyladenosine(37) in tRNA + (sulfur carrier)-SH + AH2 + 2 S-adenosyl-L-methionine = 2-methylsulfanyl-N(6)-dimethylallyladenosine(37) in tRNA + (sulfur carrier)-H + 5'-deoxyadenosine + L-methionine + A + S-adenosyl-L-homocysteine + 2 H(+). Catalyzes the methylthiolation of N6-(dimethylallyl)adenosine (i(6)A), leading to the formation of 2-methylthio-N6-(dimethylallyl)adenosine (ms(2)i(6)A) at position 37 in tRNAs that read codons beginning with uridine. This Helicobacter pylori (strain Shi470) protein is tRNA-2-methylthio-N(6)-dimethylallyladenosine synthase.